The following is a 111-amino-acid chain: Cell division protein FtsB (111 aa).

The Cytoplasmic portion of the chain corresponds to 1–3 (MRL). The chain crosses the membrane as a helical span at residues 4–21 (ITLFLLLLLLAIQYPLWL). Topologically, residues 22 to 111 (GKGGWLRVWD…PPPAGQQAHH (90 aa)) are periplasmic. The stretch at 31–64 (DMQKQVTAQNQRNAELKQRNTKLEGEVKDLKEGT) forms a coiled coil. A disordered region spans residues 89-111 (APAPKTSETPLPPPPPAGQQAHH).

The protein belongs to the FtsB family. In terms of assembly, part of a complex composed of FtsB, FtsL and FtsQ.

Its subcellular location is the cell inner membrane. Its function is as follows. Essential cell division protein. May link together the upstream cell division proteins, which are predominantly cytoplasmic, with the downstream cell division proteins, which are predominantly periplasmic. In Ralstonia pickettii (strain 12J), this protein is Cell division protein FtsB.